A 292-amino-acid chain; its full sequence is Phosphatidylserine decarboxylase proenzyme (292 aa).

Active-site charge relay system; for autoendoproteolytic cleavage activity residues include aspartate 98, histidine 153, and serine 254. Residue serine 254 is the Schiff-base intermediate with substrate; via pyruvic acid; for decarboxylase activity of the active site. Serine 254 bears the Pyruvic acid (Ser); by autocatalysis mark.

It belongs to the phosphatidylserine decarboxylase family. PSD-B subfamily. Prokaryotic type I sub-subfamily. As to quaternary structure, heterodimer of a large membrane-associated beta subunit and a small pyruvoyl-containing alpha subunit. Pyruvate serves as cofactor. Post-translationally, is synthesized initially as an inactive proenzyme. Formation of the active enzyme involves a self-maturation process in which the active site pyruvoyl group is generated from an internal serine residue via an autocatalytic post-translational modification. Two non-identical subunits are generated from the proenzyme in this reaction, and the pyruvate is formed at the N-terminus of the alpha chain, which is derived from the carboxyl end of the proenzyme. The autoendoproteolytic cleavage occurs by a canonical serine protease mechanism, in which the side chain hydroxyl group of the serine supplies its oxygen atom to form the C-terminus of the beta chain, while the remainder of the serine residue undergoes an oxidative deamination to produce ammonia and the pyruvoyl prosthetic group on the alpha chain. During this reaction, the Ser that is part of the protease active site of the proenzyme becomes the pyruvoyl prosthetic group, which constitutes an essential element of the active site of the mature decarboxylase.

The protein resides in the cell membrane. The catalysed reaction is a 1,2-diacyl-sn-glycero-3-phospho-L-serine + H(+) = a 1,2-diacyl-sn-glycero-3-phosphoethanolamine + CO2. It functions in the pathway phospholipid metabolism; phosphatidylethanolamine biosynthesis; phosphatidylethanolamine from CDP-diacylglycerol: step 2/2. Functionally, catalyzes the formation of phosphatidylethanolamine (PtdEtn) from phosphatidylserine (PtdSer). The sequence is that of Phosphatidylserine decarboxylase proenzyme from Halorhodospira halophila (strain DSM 244 / SL1) (Ectothiorhodospira halophila (strain DSM 244 / SL1)).